The following is a 692-amino-acid chain: Elongation factor G (692 aa).

Residues 8 to 283 (DRYRNIGIMA…AVVDFLPSPL (276 aa)) form the tr-type G domain. GTP contacts are provided by residues 17–24 (AHIDAGKT), 81–85 (DTPGH), and 135–138 (NKMD).

It belongs to the TRAFAC class translation factor GTPase superfamily. Classic translation factor GTPase family. EF-G/EF-2 subfamily.

Its subcellular location is the cytoplasm. Its function is as follows. Catalyzes the GTP-dependent ribosomal translocation step during translation elongation. During this step, the ribosome changes from the pre-translocational (PRE) to the post-translocational (POST) state as the newly formed A-site-bound peptidyl-tRNA and P-site-bound deacylated tRNA move to the P and E sites, respectively. Catalyzes the coordinated movement of the two tRNA molecules, the mRNA and conformational changes in the ribosome. This is Elongation factor G from Rhodospirillum rubrum (strain ATCC 11170 / ATH 1.1.1 / DSM 467 / LMG 4362 / NCIMB 8255 / S1).